Here is a 211-residue protein sequence, read N- to C-terminus: Acyl-homoserine-lactone synthase (211 aa).

This sequence belongs to the autoinducer synthase family.

It carries out the reaction a fatty acyl-[ACP] + S-adenosyl-L-methionine = an N-acyl-L-homoserine lactone + S-methyl-5'-thioadenosine + holo-[ACP] + H(+). In terms of biological role, required for the synthesis of OHHL (N-(3-oxohexanoyl)-L-homoserine lactone), an autoinducer molecule which binds to TraR and thus acts in the control of conjugal transfer. The chain is Acyl-homoserine-lactone synthase (traI) from Agrobacterium fabrum (strain C58 / ATCC 33970) (Agrobacterium tumefaciens (strain C58)).